The sequence spans 159 residues: Putative UPF0479 protein YDR545C-A (159 aa).

2 helical membrane passes run 38–58 (IVFCLPFFPALFLVPVQKVLQ) and 135–155 (VPMIWLDVFQVFFVFLVISQH).

This sequence belongs to the UPF0479 family.

It localises to the membrane. In Saccharomyces cerevisiae (strain ATCC 204508 / S288c) (Baker's yeast), this protein is Putative UPF0479 protein YDR545C-A.